A 316-amino-acid chain; its full sequence is ATP synthase gamma chain (316 aa).

Belongs to the ATPase gamma chain family. As to quaternary structure, F-type ATPases have 2 components, CF(1) - the catalytic core - and CF(0) - the membrane proton channel. CF(1) has five subunits: alpha(3), beta(3), gamma(1), delta(1), epsilon(1). CF(0) has three main subunits: a, b and c.

It localises to the cellular thylakoid membrane. In terms of biological role, produces ATP from ADP in the presence of a proton gradient across the membrane. The gamma chain is believed to be important in regulating ATPase activity and the flow of protons through the CF(0) complex. The polypeptide is ATP synthase gamma chain (Prochlorococcus marinus subsp. pastoris (strain CCMP1986 / NIES-2087 / MED4)).